A 228-amino-acid chain; its full sequence is uncharacterized protein (228 aa).

The signal sequence occupies residues 1–23 (MIRHTRLLLASLCLIATGARASA).

This is an uncharacterized protein from Methylorubrum extorquens (strain ATCC 14718 / DSM 1338 / JCM 2805 / NCIMB 9133 / AM1) (Methylobacterium extorquens).